A 433-amino-acid polypeptide reads, in one-letter code: Probable beta-1,3-galactosyl-O-glycosyl-glycoprotein beta-1,6-N-acetylglucosaminyltransferase 7 (433 aa).

Over 1 to 8 the chain is Cytoplasmic; the sequence is MSQLRTTK. The chain crosses the membrane as a helical; Signal-anchor for type II membrane protein span at residues 9-25; it reads AGLVACGMICAFIFLYL. At 26–433 the chain is on the extracellular side; that stretch reads RNPGPEEAEA…QSHFNSQPHH (408 aa). 4 disulfides stabilise this stretch: Cys57–Cys209, Cys143–Cys358, Cys164–Cys191, and Cys367–Cys398. N-linked (GlcNAc...) asparagine glycosylation occurs at Asn112. Positions 233–275 are disordered; that stretch reads NITPGVTPPANSKPKTGQGPPKPSPDENSYTAPNTIFKQSPPH. The segment covering 258–275 has biased composition (polar residues); it reads DENSYTAPNTIFKQSPPH. The interval 413-433 is disordered; that stretch reads VPPEPHWQFPQQSHFNSQPHH. The span at 421–433 shows a compositional bias: polar residues; the sequence is FPQQSHFNSQPHH.

This sequence belongs to the glycosyltransferase 14 family.

It is found in the golgi apparatus membrane. It functions in the pathway protein modification; protein glycosylation. Probable glycosyltransferase. The sequence is that of Probable beta-1,3-galactosyl-O-glycosyl-glycoprotein beta-1,6-N-acetylglucosaminyltransferase 7 from Mus musculus (Mouse).